The primary structure comprises 369 residues: IST1-like protein (369 aa).

Residues 12-59 (KLKVQLKLAVSRIQILKNKKANIVRDEKRNVAELLRKKNEESARIRVE) adopt a coiled-coil conformation. Residues 224-354 (QIIQQQQQPQ…SSDTGYPDYD (131 aa)) form a disordered region. Composition is skewed to low complexity over residues 225–239 (IIQQ…SFPI) and 246–270 (PTFS…SPQF). The segment covering 277–305 (FYNNNSGNQTPQFPTISTNNSDGYSNDKF) has biased composition (polar residues). The segment covering 306–337 (NNGNNNYNNNNNNNNNNNNNNNHNNNNNNNNN) has biased composition (low complexity).

It belongs to the IST1 family.

This chain is IST1-like protein, found in Dictyostelium discoideum (Social amoeba).